A 116-amino-acid polypeptide reads, in one-letter code: Ribonuclease P protein component (116 aa).

It belongs to the RnpA family. In terms of assembly, consists of a catalytic RNA component (M1 or rnpB) and a protein subunit.

It catalyses the reaction Endonucleolytic cleavage of RNA, removing 5'-extranucleotides from tRNA precursor.. RNaseP catalyzes the removal of the 5'-leader sequence from pre-tRNA to produce the mature 5'-terminus. It can also cleave other RNA substrates such as 4.5S RNA. The protein component plays an auxiliary but essential role in vivo by binding to the 5'-leader sequence and broadening the substrate specificity of the ribozyme. The polypeptide is Ribonuclease P protein component (Leuconostoc citreum (strain KM20)).